The primary structure comprises 209 residues: 3-demethoxyubiquinol 3-hydroxylase (209 aa).

Residues E58, E88, H91, E140, E172, and H175 each contribute to the Fe cation site.

It belongs to the COQ7 family. It depends on Fe cation as a cofactor.

It localises to the cell membrane. The enzyme catalyses a 5-methoxy-2-methyl-3-(all-trans-polyprenyl)benzene-1,4-diol + AH2 + O2 = a 3-demethylubiquinol + A + H2O. The protein operates within cofactor biosynthesis; ubiquinone biosynthesis. Its function is as follows. Catalyzes the hydroxylation of 2-nonaprenyl-3-methyl-6-methoxy-1,4-benzoquinol during ubiquinone biosynthesis. In Polaromonas sp. (strain JS666 / ATCC BAA-500), this protein is 3-demethoxyubiquinol 3-hydroxylase.